Reading from the N-terminus, the 623-residue chain is Serine/threonine-protein kinase ArnS (623 aa).

A run of 2 helical transmembrane segments spans residues 13–33 (MILI…GIVL) and 49–69 (VYLI…QSLI). Residues 317 to 623 (YRVIEVIGLG…SYDIVKILEG (307 aa)) enclose the Protein kinase domain. ATP contacts are provided by residues 323-331 (IGLGGNGYV) and Lys-344. The active-site Proton acceptor is the Asp-460.

It belongs to the protein kinase superfamily. Ser/Thr protein kinase family. Post-translationally, autophosphorylated.

The protein resides in the cell membrane. It carries out the reaction L-seryl-[protein] + ATP = O-phospho-L-seryl-[protein] + ADP + H(+). It catalyses the reaction L-threonyl-[protein] + ATP = O-phospho-L-threonyl-[protein] + ADP + H(+). With respect to regulation, autophosphorylation is stimulated by Mn(2+). Plays an essential role in the controlled expression of archaellum components during starvation-induced motility. May inhibit arnR transcription and promote ArnR translation. This chain is Serine/threonine-protein kinase ArnS, found in Sulfolobus acidocaldarius (strain ATCC 33909 / DSM 639 / JCM 8929 / NBRC 15157 / NCIMB 11770).